The primary structure comprises 106 residues: 3-phenylpropionate/cinnamic acid dioxygenase ferredoxin subunit (106 aa).

In terms of domain architecture, Rieske spans 4–99 (IYACPVADVP…VHVEGGDIFI (96 aa)). [2Fe-2S] cluster is bound by residues Cys-42, His-44, Cys-62, and His-65.

The protein belongs to the bacterial ring-hydroxylating dioxygenase ferredoxin component family. As to quaternary structure, this dioxygenase system consists of four proteins: the two subunits of the hydroxylase component (HcaE and HcaF), a ferredoxin (HcaC) and a ferredoxin reductase (HcaD). The cofactor is [2Fe-2S] cluster.

It participates in aromatic compound metabolism; 3-phenylpropanoate degradation. Part of the multicomponent 3-phenylpropionate dioxygenase, that converts 3-phenylpropionic acid (PP) and cinnamic acid (CI) into 3-phenylpropionate-dihydrodiol (PP-dihydrodiol) and cinnamic acid-dihydrodiol (CI-dihydrodiol), respectively. This protein seems to be a 2Fe-2S ferredoxin. The chain is 3-phenylpropionate/cinnamic acid dioxygenase ferredoxin subunit from Escherichia coli O139:H28 (strain E24377A / ETEC).